Reading from the N-terminus, the 599-residue chain is Elongation factor 4 (599 aa).

A tr-type G domain is found at 5–187 (SHIRNFSIIA…RLVQTIPAPT (183 aa)). Residues 17–22 (DHGKST) and 134–137 (NKMD) contribute to the GTP site.

The protein belongs to the TRAFAC class translation factor GTPase superfamily. Classic translation factor GTPase family. LepA subfamily.

The protein localises to the cell inner membrane. The enzyme catalyses GTP + H2O = GDP + phosphate + H(+). Required for accurate and efficient protein synthesis under certain stress conditions. May act as a fidelity factor of the translation reaction, by catalyzing a one-codon backward translocation of tRNAs on improperly translocated ribosomes. Back-translocation proceeds from a post-translocation (POST) complex to a pre-translocation (PRE) complex, thus giving elongation factor G a second chance to translocate the tRNAs correctly. Binds to ribosomes in a GTP-dependent manner. This chain is Elongation factor 4, found in Ectopseudomonas mendocina (strain ymp) (Pseudomonas mendocina).